The following is a 694-amino-acid chain: DNA-directed RNA polymerase subunit beta' (694 aa).

Zn(2+) is bound by residues Cys69, Cys71, Cys87, and Cys90. Mg(2+) contacts are provided by Asp489, Asp491, and Asp493.

It belongs to the RNA polymerase beta' chain family. RpoC1 subfamily. As to quaternary structure, in plastids the minimal PEP RNA polymerase catalytic core is composed of four subunits: alpha, beta, beta', and beta''. When a (nuclear-encoded) sigma factor is associated with the core the holoenzyme is formed, which can initiate transcription. Mg(2+) serves as cofactor. Requires Zn(2+) as cofactor.

The protein resides in the plastid. It localises to the chloroplast. The catalysed reaction is RNA(n) + a ribonucleoside 5'-triphosphate = RNA(n+1) + diphosphate. DNA-dependent RNA polymerase catalyzes the transcription of DNA into RNA using the four ribonucleoside triphosphates as substrates. The protein is DNA-directed RNA polymerase subunit beta' of Adiantum capillus-veneris (Maidenhair fern).